The primary structure comprises 264 residues: Thiazole synthase (264 aa).

Residue Lys106 is the Schiff-base intermediate with DXP of the active site. Residues Gly167, 193–194 (AG), and 215–216 (NS) contribute to the 1-deoxy-D-xylulose 5-phosphate site.

It belongs to the ThiG family. Homotetramer. Forms heterodimers with either ThiH or ThiS.

The protein resides in the cytoplasm. It catalyses the reaction [ThiS sulfur-carrier protein]-C-terminal-Gly-aminoethanethioate + 2-iminoacetate + 1-deoxy-D-xylulose 5-phosphate = [ThiS sulfur-carrier protein]-C-terminal Gly-Gly + 2-[(2R,5Z)-2-carboxy-4-methylthiazol-5(2H)-ylidene]ethyl phosphate + 2 H2O + H(+). Its pathway is cofactor biosynthesis; thiamine diphosphate biosynthesis. Functionally, catalyzes the rearrangement of 1-deoxy-D-xylulose 5-phosphate (DXP) to produce the thiazole phosphate moiety of thiamine. Sulfur is provided by the thiocarboxylate moiety of the carrier protein ThiS. In vitro, sulfur can be provided by H(2)S. In Prochlorococcus marinus (strain MIT 9312), this protein is Thiazole synthase.